Consider the following 352-residue polypeptide: MSKFFSLSLVAVVVAGGLTLYWRWPAAVPEAQPATTVAVPSRQSLIEQASTSPAKAPAEAQPSIAVTLPSLAGTEVDGQLRTDAAGNLLLDLAVRDYFDYFLSAVDHSGLDAVIEALLADAGRRLPEPALGQMISLLGDYLDYKRASMALMQQPLDARQQVEPQAQLQALQSAFARLDELRRAHFSATAQEALFGAEQAYARYTLDSLAVQQRDDLGEAQRTQLLEQLRERLPDALRESEQRQQLAQEQLQRSEQLWRDGADEQQVREFLAMTYDPDTVQRLLDEQRRERDWQQHYQAYRNELASLQGRGLSEADGEQLQRQLRERLFSSEDRHRVETYDAIAAKQPEPLDP.

The helical transmembrane segment at 7–28 (LSLVAVVVAGGLTLYWRWPAAV) threads the bilayer.

It belongs to the lipase chaperone family.

It localises to the cell inner membrane. In terms of biological role, may be involved in the folding of the extracellular lipase during its passage through the periplasm. This is Lipase chaperone (lifO) from Pseudomonas wisconsinensis.